Reading from the N-terminus, the 1070-residue chain is MRRDGNEGMSTIPGFNQIQFEGFCRFIDQGLTEELYKFPKIEDTDQEIEFQLFVETYQLVEPLIKERDAVYESLTYSSEVYVPAGLIWKPGRDMQEQTIFIGNIPLMNSLGTSIVNGIYRIVINQILQSPGIYYRSESDHNGISVYTGTIISDWGGRSELEIDRKARIWARVSRKQKISILVPSSAMGSNLREILDNVCYPEIFLSFLNDKEKKKIGSKENAILEFYQQFACVGGDPVFSESLCKELQKKFFQQRCELGRIGRRNMNRRLNLDIPQNNTFLLPRDVLAAADHLIGMKFGMGTLDDMNHLKNKRIRSVADLLQDQFGLALIRLENVVRGTICGAIKHKLIPTPQNLVTSTPLTTTYESFFGLHPLSQVLDRTNPLTQMVHGRKLSYLGPGGLTGRTASFRIRDIHSSHYGRICPIDTSEGINVGLIGSLAIYARIGHWGSLESPFYEISDRSKEVQMLYLSPSRDEYYMVAAGNSLALNQSIPEEQVVPARYRQEFLTIAWEQVHFRSIFPFQYFSIGASLIPFIEHNDANRALMSSNMQRQAVPLSQSEKCIVGTGLERQAALDSGVSTIAEHEGKIIYTDTDKIILLGNGDTLSIPLVMYQRSNKNTCMYQKPQVRRGKFIKKGQIVADGAATVGGELALGKNVLVAYMPWEGYNSEDAVLISERLVYGDIYTSFHIRKYEIQTHVTSQGPERITNEIPHLEAHLLRNLDRNGIVMLGSWVETGDILVGKLTPQMAKESSYAPEDRLLRAILGIQVSTSKETCLKLPIGGRGRVIDVRWIQKKGGSSYNPETICVYISQKREIKVGDKVAGRHGNKGIISKILPRQDMPYLQDGTPIDMVFNPLGVPSRMNVGQIFECSLGLAGDLLDRHYRIAPFDERYEQEASRKLVFSELYKASKQTANPWVFEPEYPGKSRIFDGRTGDPFEQPVLIGKSYILKLIHQVDDKIHGRSSGHYALVTQQPLRGRAKQGGQRVGEMEVWALEGFGVAHILQEMLTYKSDHIRARQEVLGTTIVGGTIPSPEDAPESFRLLVRELRSLALELNHFLVSEKNFQINRKEA.

It belongs to the RNA polymerase beta chain family. As to quaternary structure, in plastids the minimal PEP RNA polymerase catalytic core is composed of four subunits: alpha, beta, beta', and beta''. When a (nuclear-encoded) sigma factor is associated with the core the holoenzyme is formed, which can initiate transcription.

The protein localises to the plastid. It localises to the chloroplast. The enzyme catalyses RNA(n) + a ribonucleoside 5'-triphosphate = RNA(n+1) + diphosphate. In terms of biological role, DNA-dependent RNA polymerase catalyzes the transcription of DNA into RNA using the four ribonucleoside triphosphates as substrates. The sequence is that of DNA-directed RNA polymerase subunit beta from Platanus occidentalis (Sycamore).